Here is a 666-residue protein sequence, read N- to C-terminus: Neopullulanase 1 (666 aa).

An N-terminal signal peptide occupies residues Met-1–Ala-29. Residues Ala-31, Asp-33, Asn-35, Asp-71, Asp-125, Asn-174, Asp-176, Asn-179, Asp-180, Gly-216, and Asp-218 each contribute to the Ca(2+) site. His-296 provides a ligand contact to substrate. Ca(2+) contacts are provided by Asp-305, Asn-309, Phe-310, Ser-312, and Glu-317. Arg-383 contributes to the substrate binding site. Asp-385 serves as the catalytic Nucleophile. Catalysis depends on Glu-425, which acts as the Proton donor. Residues His-500 to Asp-501, Asp-545, and Arg-549 contribute to the substrate site.

It belongs to the glycosyl hydrolase 13 family. Ca(2+) serves as cofactor.

The protein localises to the secreted. The catalysed reaction is Hydrolysis of pullulan to panose (6-alpha-D-glucosylmaltose).. Endohydrolysis of 1,4-alpha-glucosidic linkages in pullulan to form panose. Also hydrolyzes cyclodextrins. In Thermoactinomyces vulgaris, this protein is Neopullulanase 1 (tvaI).